Here is a 951-residue protein sequence, read N- to C-terminus: Protein translocase subunit SecA (951 aa).

ATP is bound by residues Gln90, 108–112 (GEGKT), and Asp509.

This sequence belongs to the SecA family. As to quaternary structure, monomer and homodimer. Part of the essential Sec protein translocation apparatus which comprises SecA, SecYEG and auxiliary proteins SecDF. Other proteins may also be involved.

The protein localises to the cell inner membrane. The protein resides in the cellular thylakoid membrane. Its subcellular location is the cytoplasm. The catalysed reaction is ATP + H2O + cellular proteinSide 1 = ADP + phosphate + cellular proteinSide 2.. In terms of biological role, part of the Sec protein translocase complex. Interacts with the SecYEG preprotein conducting channel. Has a central role in coupling the hydrolysis of ATP to the transfer of proteins into and across the cell membrane, serving as an ATP-driven molecular motor driving the stepwise translocation of polypeptide chains across the membrane. Probably participates in protein translocation into and across both the cytoplasmic and thylakoid membranes in cyanobacterial cells. The protein is Protein translocase subunit SecA of Prochlorococcus marinus (strain MIT 9303).